A 271-amino-acid chain; its full sequence is Ribosomal RNA small subunit methyltransferase A (271 aa).

S-adenosyl-L-methionine-binding residues include N19, L21, G46, E67, D92, and N113.

Belongs to the class I-like SAM-binding methyltransferase superfamily. rRNA adenine N(6)-methyltransferase family. RsmA subfamily.

It localises to the cytoplasm. The enzyme catalyses adenosine(1518)/adenosine(1519) in 16S rRNA + 4 S-adenosyl-L-methionine = N(6)-dimethyladenosine(1518)/N(6)-dimethyladenosine(1519) in 16S rRNA + 4 S-adenosyl-L-homocysteine + 4 H(+). Its function is as follows. Specifically dimethylates two adjacent adenosines (A1518 and A1519) in the loop of a conserved hairpin near the 3'-end of 16S rRNA in the 30S particle. May play a critical role in biogenesis of 30S subunits. The polypeptide is Ribosomal RNA small subunit methyltransferase A (Photobacterium profundum (strain SS9)).